The following is a 952-amino-acid chain: GATA zinc finger domain-containing protein 5 (952 aa).

Disordered regions lie at residues Met-1 to Ser-36 and Pro-138 to Gln-197. A compositionally biased stretch (polar residues) spans Gln-10–Ser-24. A compositionally biased stretch (pro residues) spans Ser-148–Ala-157. Positions Ala-158 to Lys-196 are enriched in low complexity. Residues Cys-241 to Cys-266 form a GATA-type zinc finger. Disordered stretches follow at residues Met-380 to Pro-418, Leu-433 to Gly-478, Gln-634 to Asn-699, and Gln-732 to Asn-816. Over residues Lys-393 to His-412 the composition is skewed to basic residues. The span at Ser-445–Asn-467 shows a compositional bias: low complexity. Residues Ser-468–Gly-478 are compositionally biased toward gly residues. Residues Gln-634–Leu-653 are compositionally biased toward polar residues. 3 stretches are compositionally biased toward low complexity: residues Asn-654–Lys-668, Asn-678–Asn-699, and Gln-732–Gln-745. Over residues Asn-746–Gly-762 the composition is skewed to polar residues. The span at Thr-763 to Ser-814 shows a compositional bias: low complexity.

This chain is GATA zinc finger domain-containing protein 5 (gtaE), found in Dictyostelium discoideum (Social amoeba).